The sequence spans 544 residues: Phenylalanine--tRNA ligase beta subunit (544 aa).

The 77-residue stretch at 270–346 (LEPKTRFLTK…KGYGYENIKV (77 aa)) folds into the B5 domain. Residues Asp-324, Asp-330, Glu-333, and Asp-334 each contribute to the Mg(2+) site.

The protein belongs to the phenylalanyl-tRNA synthetase beta subunit family. Type 2 subfamily. Tetramer of two alpha and two beta subunits. Mg(2+) serves as cofactor.

It localises to the cytoplasm. It carries out the reaction tRNA(Phe) + L-phenylalanine + ATP = L-phenylalanyl-tRNA(Phe) + AMP + diphosphate + H(+). The sequence is that of Phenylalanine--tRNA ligase beta subunit from Methanosarcina barkeri (strain Fusaro / DSM 804).